A 325-amino-acid chain; its full sequence is Alpha-cuprenene synthase COP6 (325 aa).

Mg(2+) is bound by residues aspartate 102, glutamate 166, asparagine 224, serine 228, and glutamate 232.

This sequence belongs to the trichodiene synthase family. Mg(2+) is required as a cofactor.

Its function is as follows. Alpha-cuprenene synthase; part of the gene cluster that mediates the biosynthesis of alpha-cuprenene and oxidized derivatives. The alpha-cuprenene synthase COP6 is the only sesquiterpene synthase identified in C.cinereus that appears to be part of a biosynthetic gene cluster and is highly specific since it catalyzes the cyclization of (2E,6E)-farnesyl diphosphate into only one product, alpha-cuprenene. COP6 is also able to perform the cyclization of geranyl diphosphate. The cytochrome P450 monooxygenase COX2 then oxidizes the cyclohexadiene ring of alpha-cuprenene at positions 1 and 4, yielding first alpha-cuparene, followed by alpha-cuparophenol and a further yet unidentified compound resulting from one additional oxidation step. The cytochrome P450 monooxygenase COX1 then likely catalyzes the oxidation at position 9 of the pentane ring of alpha-cuprenene to give the corresponding hydroxy or ketone derivatives. The protein is Alpha-cuprenene synthase COP6 of Coprinopsis cinerea (strain Okayama-7 / 130 / ATCC MYA-4618 / FGSC 9003) (Inky cap fungus).